A 179-amino-acid chain; its full sequence is Large ribosomal subunit protein uL6 (179 aa).

This sequence belongs to the universal ribosomal protein uL6 family. In terms of assembly, part of the 50S ribosomal subunit.

Functionally, this protein binds to the 23S rRNA, and is important in its secondary structure. It is located near the subunit interface in the base of the L7/L12 stalk, and near the tRNA binding site of the peptidyltransferase center. This Bifidobacterium longum (strain DJO10A) protein is Large ribosomal subunit protein uL6.